Reading from the N-terminus, the 289-residue chain is ATP phosphoribosyltransferase (289 aa).

This sequence belongs to the ATP phosphoribosyltransferase family. Long subfamily. It depends on Mg(2+) as a cofactor.

It localises to the cytoplasm. The enzyme catalyses 1-(5-phospho-beta-D-ribosyl)-ATP + diphosphate = 5-phospho-alpha-D-ribose 1-diphosphate + ATP. It participates in amino-acid biosynthesis; L-histidine biosynthesis; L-histidine from 5-phospho-alpha-D-ribose 1-diphosphate: step 1/9. Its activity is regulated as follows. Feedback inhibited by histidine. Catalyzes the condensation of ATP and 5-phosphoribose 1-diphosphate to form N'-(5'-phosphoribosyl)-ATP (PR-ATP). Has a crucial role in the pathway because the rate of histidine biosynthesis seems to be controlled primarily by regulation of HisG enzymatic activity. The protein is ATP phosphoribosyltransferase of Methanosarcina barkeri (strain Fusaro / DSM 804).